We begin with the raw amino-acid sequence, 94 residues long: CRISPR-associated endoribonuclease Cas2 (94 aa).

It belongs to the CRISPR-associated endoribonuclease Cas2 protein family. E.coli-subtype subfamily. In terms of assembly, homodimer. Part of the Cas1-Cas2 complex. Forms a hexamer with 2 Cas1 dimers sandwiching a Cas2 dimer. The DNA lies across a flat surface extending from 1 Cas1 dimer, across the Cas2 dimer and contacting the other Cas1 dimer. Only 1 Cas1 protein from each dimer is catalytic, the other interacts with the Cas2 dimer and possibly target DNA.

CRISPR (clustered regularly interspaced short palindromic repeat), is an adaptive immune system that provides protection against mobile genetic elements (viruses, transposable elements and conjugative plasmids). CRISPR clusters contain sequences complementary to antecedent mobile elements and target invading nucleic acids. CRISPR clusters are transcribed and processed into CRISPR RNA (crRNA). The Cas1-Cas2 complex is involved in CRISPR adaptation, the first stage of CRISPR immunity, being required for the addition/removal of CRISPR spacers at the leader end of the CRISPR locus. The Cas1-Cas2 complex introduces staggered nicks into both strands of the CRISPR array near the leader repeat and joins the 5'-ends of the repeat strands with the 3'-ends of the new spacer sequence. Spacer DNA integration requires supercoiled target DNA and 3'-OH ends on the inserted (spacer) DNA and probably initiates with a nucleophilic attack of the C 3'-OH end of the protospacer on the minus strand of the first repeat sequence. Expression of Cas1-Cas2 in a strain lacking both genes permits spacer acquisition. Cas2 not seen to bind DNA alone; the Cas1-Cas2 complex preferentially binds CRISPR-locus DNA. Highest binding is seen to a dual forked DNA complex with 3'-overhangs and a protospacer-adjacent motif-complement specifically positioned. The protospacer DNA lies across a flat surface extending from 1 Cas1 dimer, across the Cas2 dimer and contacting the other Cas1 dimer; the 23 bp-long ds section of the DNA is bracketed by 1 Tyr-22 from each of the Cas1 dimers. Cas1 cuts within the 3'-overhang, to generate a 33-nucleotide DNA that is probably incorporated into the CRISPR leader by a cut-and-paste mechanism. This subunit's probable nuclease activity is not required for spacer acquisition. This chain is CRISPR-associated endoribonuclease Cas2 (ygbF), found in Escherichia coli (strain K12).